A 488-amino-acid polypeptide reads, in one-letter code: Bifunctional protein NifU/MnmA (488 aa).

Residues 1–130 (MPERYGPRVI…DYWSRQGDAL (130 aa)) form a nifU-like protein region. The segment at 143 to 488 (RRGVVAAMSG…GGGIIARRDA (346 aa)) is tRNA-specific 2-thiouridylase MnmA. ATP-binding positions include 149 to 156 (AMSGGVDS) and F175. C240 functions as the Nucleophile in the catalytic mechanism. C240 and C333 are oxidised to a cystine. ATP is bound at residue G264. An interaction with tRNA region spans residues 283–285 (KDQ). C333 serves as the catalytic Cysteine persulfide intermediate. An interaction with tRNA region spans residues 433–434 (RY).

In the N-terminal section; belongs to the NifU family. The protein in the C-terminal section; belongs to the MnmA/TRMU family.

Its subcellular location is the cytoplasm. It carries out the reaction S-sulfanyl-L-cysteinyl-[protein] + uridine(34) in tRNA + AH2 + ATP = 2-thiouridine(34) in tRNA + L-cysteinyl-[protein] + A + AMP + diphosphate + H(+). May be involved in the formation or repair of [Fe-S] clusters present in iron-sulfur proteins. Functionally, catalyzes the 2-thiolation of uridine at the wobble position (U34) of tRNA, leading to the formation of s(2)U34. This is Bifunctional protein NifU/MnmA (nifU/mnmA) from Rubrobacter xylanophilus (strain DSM 9941 / JCM 11954 / NBRC 16129 / PRD-1).